The sequence spans 270 residues: Acyl-[acyl-carrier-protein]--UDP-N-acetylglucosamine O-acyltransferase (270 aa).

The protein belongs to the transferase hexapeptide repeat family. LpxA subfamily. In terms of assembly, homotrimer.

The protein localises to the cytoplasm. The catalysed reaction is a (3R)-hydroxyacyl-[ACP] + UDP-N-acetyl-alpha-D-glucosamine = a UDP-3-O-[(3R)-3-hydroxyacyl]-N-acetyl-alpha-D-glucosamine + holo-[ACP]. It functions in the pathway glycolipid biosynthesis; lipid IV(A) biosynthesis; lipid IV(A) from (3R)-3-hydroxytetradecanoyl-[acyl-carrier-protein] and UDP-N-acetyl-alpha-D-glucosamine: step 1/6. Its function is as follows. Involved in the biosynthesis of lipid A, a phosphorylated glycolipid that anchors the lipopolysaccharide to the outer membrane of the cell. In Helicobacter pylori (strain P12), this protein is Acyl-[acyl-carrier-protein]--UDP-N-acetylglucosamine O-acyltransferase.